The following is a 326-amino-acid chain: Glutaminase 2 (326 aa).

S73, N125, E169, N176, Y200, Y252, and V270 together coordinate substrate.

This sequence belongs to the glutaminase family. Homotetramer.

The enzyme catalyses L-glutamine + H2O = L-glutamate + NH4(+). This Bacillus cereus (strain ATCC 14579 / DSM 31 / CCUG 7414 / JCM 2152 / NBRC 15305 / NCIMB 9373 / NCTC 2599 / NRRL B-3711) protein is Glutaminase 2.